The primary structure comprises 469 residues: Programmed cell death protein 4 (469 aa).

Residue methionine 1 is modified to N-acetylmethionine. 2 disordered regions span residues 1–30 and 58–128; these read MDVE…DEEN and KAKR…GTPG. Over residues 7–23 the composition is skewed to polar residues; the sequence is QILNVNPTDPDNLSDSL. Serine 25 is subject to Phosphoserine. The short motif at 58–64 is the Nuclear localization signal element; that stretch reads KAKRRLR. Serine 67 bears the Phosphoserine; by PKB and RPS6KB1 mark. 5 positions are modified to phosphoserine: serine 68, serine 71, serine 76, serine 78, and serine 94. The Phosphodegron motif lies at 70 to 76; it reads DSGRGDS. Positions 114–125 are enriched in gly residues; it reads KKGGAGGKGVWG. Tyrosine 152 is modified (phosphotyrosine). In terms of domain architecture, MI 1 spans 163–284; it reads AFEKTLTPII…CNTYIDSYKG (122 aa). A phosphoserine mark is found at serine 313 and serine 317. The region spanning 326 to 449 is the MI 2 domain; the sequence is HLVKEIDMLL…SKQLRDLCPS (124 aa). The Nuclear localization signal signature appears at 448 to 454; the sequence is PSRGRKR. Serine 457 carries the post-translational modification Phosphoserine.

Belongs to the PDCD4 family. As to quaternary structure, interacts (via MI domains) with EIF4A2. Interacts (via MI domains) with EIF4A1 (via N-terminal domain). Heterotrimer with EIF4A1; one molecule of PDCD4 binds two molecules of EIF4A1. Interacts with EIF4G1. May form a complex with EIF4A1 and EIF4G1. The interaction between PDCD4 and EIF4A1 interferes with the interaction between EIF4A1 and EIF4G. When phosphorylated, interacts with BTRC and FBXW11. Polyubiquitinated, leading to its proteasomal degradation. Rapidly degraded in response to mitogens. Phosphorylation of the phosphodegron promotes interaction with BTRC and proteasomal degradation. Post-translationally, phosphorylated at Ser-67 by RPS6KB1 in response to mitogens; phosphorylation promotes proteasomal degradation of PDCD4.

It is found in the nucleus. The protein resides in the cytoplasm. Its function is as follows. Inhibits translation initiation and cap-dependent translation. May excert its function by hindering the interaction between EIF4A1 and EIF4G. Inhibits the helicase activity of EIF4A. Modulates the activation of JUN kinase. Down-regulates the expression of MAP4K1, thus inhibiting events important in driving invasion, namely, MAPK85 activation and consequent JUN-dependent transcription. May play a role in apoptosis. Tumor suppressor. Inhibits tumor promoter-induced neoplastic transformation. Binds RNA. The sequence is that of Programmed cell death protein 4 (Pdcd4) from Rattus norvegicus (Rat).